The sequence spans 120 residues: Large ribosomal subunit protein uL18 (120 aa).

The protein belongs to the universal ribosomal protein uL18 family. As to quaternary structure, part of the 50S ribosomal subunit; part of the 5S rRNA/L5/L18/L25 subcomplex. Contacts the 5S and 23S rRNAs.

This is one of the proteins that bind and probably mediate the attachment of the 5S RNA into the large ribosomal subunit, where it forms part of the central protuberance. This chain is Large ribosomal subunit protein uL18, found in Rhizobium etli (strain ATCC 51251 / DSM 11541 / JCM 21823 / NBRC 15573 / CFN 42).